Here is a 193-residue protein sequence, read N- to C-terminus: Pyridoxal 5'-phosphate synthase subunit PdxT (193 aa).

50–52 (GES) serves as a coordination point for L-glutamine. The Nucleophile role is filled by Cys-82. L-glutamine-binding positions include Arg-109 and 136 to 137 (IR). Active-site charge relay system residues include His-172 and Glu-174.

Belongs to the glutaminase PdxT/SNO family. In terms of assembly, in the presence of PdxS, forms a dodecamer of heterodimers. Only shows activity in the heterodimer.

The enzyme catalyses aldehydo-D-ribose 5-phosphate + D-glyceraldehyde 3-phosphate + L-glutamine = pyridoxal 5'-phosphate + L-glutamate + phosphate + 3 H2O + H(+). It carries out the reaction L-glutamine + H2O = L-glutamate + NH4(+). It functions in the pathway cofactor biosynthesis; pyridoxal 5'-phosphate biosynthesis. Functionally, catalyzes the hydrolysis of glutamine to glutamate and ammonia as part of the biosynthesis of pyridoxal 5'-phosphate. The resulting ammonia molecule is channeled to the active site of PdxS. The polypeptide is Pyridoxal 5'-phosphate synthase subunit PdxT (Streptococcus pneumoniae serotype 2 (strain D39 / NCTC 7466)).